A 915-amino-acid chain; its full sequence is Translation initiation factor IF-2 (915 aa).

Residues 83-94 (QSRRAVEKEQIL) show a composition bias toward basic and acidic residues. 3 disordered regions span residues 83 to 177 (QSRR…PEPP), 216 to 280 (EADR…KPAV), and 293 to 328 (ISGMDDSSGTGSRSKFRKQRKMEREREQEEADLLRE). Low complexity-rich tracts occupy residues 111–129 (VRAAAQPAPVPVAAGEAPS) and 137–164 (APATESAPAVAPAGVPAAEPVSEALSAP). Positions 165 to 177 (LPEPVPEPVPEPP) are enriched in pro residues. The segment covering 293–305 (ISGMDDSSGTGSR) has biased composition (polar residues). The segment covering 314–328 (MEREREQEEADLLRE) has biased composition (basic and acidic residues). The region spanning 412 to 582 (TRPPVVTIMG…LTEAEMRELK (171 aa)) is the tr-type G domain. Residues 421-428 (GHVDHGKT) form a G1 region. 421–428 (GHVDHGKT) is a GTP binding site. The segment at 446–450 (GITQH) is G2. Positions 468-471 (DTPG) are G3. Residues 468 to 472 (DTPGH) and 522 to 525 (NKMD) each bind GTP. Residues 522–525 (NKMD) are G4. Residues 558–560 (SAK) form a G5 region.

The protein belongs to the TRAFAC class translation factor GTPase superfamily. Classic translation factor GTPase family. IF-2 subfamily.

Its subcellular location is the cytoplasm. Functionally, one of the essential components for the initiation of protein synthesis. Protects formylmethionyl-tRNA from spontaneous hydrolysis and promotes its binding to the 30S ribosomal subunits. Also involved in the hydrolysis of GTP during the formation of the 70S ribosomal complex. This chain is Translation initiation factor IF-2, found in Chlorobium luteolum (strain DSM 273 / BCRC 81028 / 2530) (Pelodictyon luteolum).